A 246-amino-acid chain; its full sequence is MNFRAFLLAAIAGIATINATEVNRVNHDQVQPFAQPEPITDSQKSAVKYKPQLHISYGCHPYAAVQTDGSASGGLEWSGRVDGDCTGSQLGSQVYSRSDWYHDKWAIMYAWYFPKGRYHLGGHRHYWEYAIVWTDSPTSSNSSIQGVSMSAGVGYGKATPPMLKYIDGNSIKFDSHFSLLGNKAALQLTKEAGERQDLITWDQLTVAARDTLNGDALDGKAWFTDKDEVPFKDDIFVKRLQKAFPF.

Residues 1-19 (MNFRAFLLAAIAGIATINA) form the signal peptide. Residues 122-128 (GHRHYWE) carry the Hepta-peptide GHRHDWE motif motif. N-linked (GlcNAc...) asparagine glycosylation occurs at N141.

Belongs to the Necrosis inducing protein (NPP1) family.

It localises to the secreted. Functionally, secreted effector that contributes strongly to virulence during infection by P.capsici. Induces cell death in the Solanaceae, including Nicotiana benthamiana and hot pepper. The sequence is that of NLP effector protein Pc118548 from Phytophthora capsici.